A 981-amino-acid polypeptide reads, in one-letter code: Proline-rich transmembrane protein 3 (981 aa).

Positions 1-27 are cleaved as a signal peptide; that stretch reads MASSPWGCVCGLLLLLLPLLGTGPALG. Over 28–474 the chain is Extracellular; the sequence is RGFPRPLENS…RVLSFSWELH (447 aa). Disordered regions lie at residues 43–107 and 169–457; these read PGAH…GAQR and PPSL…TAPP. Positions 65 to 85 are enriched in basic and acidic residues; it reads PRADSHRNSDVRHAPAEEMPE. The tract at residues 297-302 is O-glycosylated at one site; it reads SWEVSS. The O-linked (GalNAc...) serine glycan is linked to S329. The span at 331–340 shows a compositional bias: basic and acidic residues; the sequence is APDRPSKPER. The O-linked (GalNAc...) threonine glycan is linked to T363. N379 is a glycosylation site (N-linked (GlcNAc...) asparagine). The span at 411-427 shows a compositional bias: polar residues; the sequence is APSTSRRGLIRVTTQRA. Over residues 437 to 457 the composition is skewed to low complexity; it reads TASSMASAPASSPPANATAPP. The helical transmembrane segment at 475-495 threads the bilayer; that stretch reads VYGVGVLFLLPALLALAALAA. The Cytoplasmic segment spans residues 496–501; that stretch reads APAGPR. The chain crosses the membrane as a helical span at residues 502 to 522; the sequence is LALVAAVLVLVASALRSAYML. Residues 523-542 are Extracellular-facing; the sequence is TDPYGSQARLGVRGGLVLYN. A helical transmembrane segment spans residues 543-563; that stretch reads LPFPLLLTALAALTLLGLGAG. Residues 564 to 570 are Cytoplasmic-facing; sequence LPPPLQN. Residues 571–591 form a helical membrane-spanning segment; sequence PLLLGAVALVHGVGLLATDLL. The Extracellular portion of the chain corresponds to 592 to 598; it reads STWSVLN. Residues 599 to 619 traverse the membrane as a helical segment; that stretch reads LLTQGLSCAWGAAVALGTLCL. At 620-638 the chain is on the cytoplasmic side; sequence CRRRLLDGPRGWDASPGPR. Residues 639-659 traverse the membrane as a helical segment; it reads LLAVAGALGLLASGLQLAAAL. The Extracellular segment spans residues 660-679; the sequence is WLYPGPGRVGRFSWAWWGVH. The helical transmembrane segment at 680-700 threads the bilayer; that stretch reads FWLRLLELTWALALALAAVAA. Topologically, residues 701–981 are cytoplasmic; it reads ARPRPPTEHA…RSASSDTIEL (281 aa). Positions 759–807 are disordered; it reads AESGQLATPSSGAWGSAASLGRGPQGGPGLSRNGVGPAPSLSELDLRPP. The span at 765–780 shows a compositional bias: low complexity; it reads ATPSSGAWGSAASLGR. Phosphoserine is present on S777. At R780 the chain carries Omega-N-methylarginine. Phosphoserine occurs at positions 789, 798, 808, 815, 854, 874, 902, 903, and 911. Positions 836-865 are disordered; that stretch reads LRGLASPPPGGALRPRRGSHPKAELDDAGS. The interval 937–981 is disordered; that stretch reads TVQLLPAPTPAPDSTAARQGDGQGEVQPRGKPGESRSASSDTIEL. The span at 972–981 shows a compositional bias: polar residues; it reads RSASSDTIEL.

It localises to the membrane. In Homo sapiens (Human), this protein is Proline-rich transmembrane protein 3 (PRRT3).